The following is a 2603-amino-acid chain: Ankyrin repeat domain-containing protein 17 (2603 aa).

M1 is subject to N-acetylmethionine. Low complexity-rich tracts occupy residues M1–E34 and S42–G53. The interval M1–E143 is disordered. 2 positions are modified to phosphoserine: S19 and S50. Basic residues predominate over residues K63–T79. The span at S84 to N94 shows a compositional bias: low complexity. The span at S95–T111 shows a compositional bias: gly residues. The span at S116–E131 shows a compositional bias: acidic residues. A Phosphoserine modification is found at S156. 15 ANK repeats span residues S233 to E262, E266 to D295, G300 to A329, T333 to D362, N366 to T395, F400 to H429, E433 to M462, S466 to E495, E499 to A528, T533 to L562, G563 to A592, T596 to H625, G629 to R658, N663 to H692, and D696 to S725. Residue K318 forms a Glycyl lysine isopeptide (Lys-Gly) (interchain with G-Cter in SUMO2) linkage. Phosphoserine is present on S803. 10 ANK repeats span residues N1082–H1111, K1115–A1144, T1149–H1178, S1182–S1211, L1217–A1246, N1251–H1280, T1284–A1313, S1319–V1348, K1352–A1381, and R1385–S1414. Residues V1442–E1526 adopt a coiled-coil conformation. S1457 is subject to Phosphoserine. 2 disordered regions span residues A1479–E1500 and E1517–E1717. The span at R1481–K1491 shows a compositional bias: basic residues. Composition is skewed to low complexity over residues T1531–T1550, E1602–S1611, and S1620–S1632. Residues S1635 and S1639 each carry the phosphoserine modification. 2 stretches are compositionally biased toward polar residues: residues V1642–Q1652 and L1675–G1703. S1696, S1700, and S1709 each carry phosphoserine. The region spanning R1725–I1789 is the KH domain. R1874 is modified (asymmetric dimethylarginine). Disordered stretches follow at residues P1906–R1995, T2011–S2192, and V2273–V2332. Low complexity-rich tracts occupy residues S1950–R1995 and T2011–T2028. Phosphoserine occurs at positions 2042, 2044, 2045, 2047, 2059, and 2067. Residues A2066–E2078 are compositionally biased toward polar residues. Low complexity predominate over residues S2095–S2106. Polar residues-rich tracts occupy residues N2107 to Q2127 and V2273 to S2303. Residues F2308–S2318 are compositionally biased toward pro residues. 2 positions are modified to phosphoserine: S2373 and S2401. The disordered stretch occupies residues C2381–V2423. Positions S2382–S2411 are enriched in low complexity.

As to quaternary structure, interacts (via N-terminus) with NOD2. Interacts with CDK2, MCM3, MCM5, MCM7, CDC6 and PCNA. Interacts with MAVS and IFIH1. Interacts (via the second ankyrin repeat cluster) with DDX58. In terms of assembly, (Microbial infection) Interacts with enterovirus 71/EV71 capsid protein VP1. Phosphorylated by CDK2. As to expression, ubiquitously expressed.

It localises to the cytoplasm. The protein localises to the nucleus. Functionally, could play pivotal roles in cell cycle and DNA regulation. Involved in innate immune defense against viruse by positively regulating the viral dsRNA receptors DDX58 and IFIH1 signaling pathways. Involves in NOD2- and NOD1-mediated responses to bacteria suggesting a role in innate antibacterial immune pathways too. Target of enterovirus 71 which is the major etiological agent of HFMD (hand, foot and mouth disease). Could play a central role for the formation and/or maintenance of the blood vessels of the circulation system. The polypeptide is Ankyrin repeat domain-containing protein 17 (ANKRD17) (Homo sapiens (Human)).